The sequence spans 147 residues: D-aminoacyl-tRNA deacylase (147 aa).

A Gly-cisPro motif, important for rejection of L-amino acids motif is present at residues G136–P137.

Belongs to the DTD family. Homodimer.

The protein resides in the cytoplasm. It carries out the reaction glycyl-tRNA(Ala) + H2O = tRNA(Ala) + glycine + H(+). The enzyme catalyses a D-aminoacyl-tRNA + H2O = a tRNA + a D-alpha-amino acid + H(+). An aminoacyl-tRNA editing enzyme that deacylates mischarged D-aminoacyl-tRNAs. Also deacylates mischarged glycyl-tRNA(Ala), protecting cells against glycine mischarging by AlaRS. Acts via tRNA-based rather than protein-based catalysis; rejects L-amino acids rather than detecting D-amino acids in the active site. By recycling D-aminoacyl-tRNA to D-amino acids and free tRNA molecules, this enzyme counteracts the toxicity associated with the formation of D-aminoacyl-tRNA entities in vivo and helps enforce protein L-homochirality. The sequence is that of D-aminoacyl-tRNA deacylase from Streptococcus agalactiae serotype III (strain NEM316).